A 610-amino-acid chain; its full sequence is Protein Spindly-B (610 aa).

Positions 1-392 (MEESETVLKL…IDKVKDELSL (392 aa)) form a coiled coil. The disordered stretch occupies residues 474–610 (TEAHGVSDAT…KPATAQCPQQ (137 aa)). 2 stretches are compositionally biased toward basic and acidic residues: residues 493–511 (SDDK…KDQD) and 535–548 (RIME…DLNK). The span at 549 to 561 (RNPNNCTITSIHP) shows a compositional bias: polar residues. The segment covering 570–583 (SELKKVDEEQEKRK) has biased composition (basic and acidic residues).

Belongs to the Spindly family.

Its subcellular location is the chromosome. It localises to the centromere. The protein localises to the kinetochore. Functionally, required for the localization of dynein and dynactin to the mitotic kintochore. Dynein is believed to control the initial lateral interaction between the kinetochore and spindle microtubules and to facilitate the subsequent formation of end-on kinetochore-microtubule attachments mediated by the NDC80 complex. The sequence is that of Protein Spindly-B (spdl1-b) from Xenopus laevis (African clawed frog).